The following is a 217-amino-acid chain: Small ribosomal subunit protein uS3 (217 aa).

The KH type-2 domain maps to 38 to 106; sequence IRKFINKELA…QVHINIIEIK (69 aa).

The protein belongs to the universal ribosomal protein uS3 family. Part of the 30S ribosomal subunit. Forms a tight complex with proteins S10 and S14.

In terms of biological role, binds the lower part of the 30S subunit head. Binds mRNA in the 70S ribosome, positioning it for translation. The chain is Small ribosomal subunit protein uS3 from Streptococcus equi subsp. equi (strain 4047).